Reading from the N-terminus, the 594-residue chain is CDPK-related kinase 4 (594 aa).

Residues 1–131 (MGHCYSRNIS…DSGGGERLDK (131 aa)) form a disordered region. The N-myristoyl glycine moiety is linked to residue Gly2. A compositionally biased stretch (polar residues) spans 37-58 (IPQSPVASGTPEVNSYNISPFQ). Basic and acidic residues predominate over residues 116–131 (VVDHGGDSGGGERLDK). In terms of domain architecture, Protein kinase spans 143–405 (YELGKEVGRG…AAQALAHPWL (263 aa)). Residues 149 to 157 (VGRGHFGHT) and Lys175 contribute to the ATP site. Catalysis depends on Asp271, which acts as the Proton acceptor. Ser311 is subject to Phosphoserine. Positions 409 to 439 (NPGLLLDFSVYKLVKSYIRASPFRRSALKAL) are autoinhibitory domain. Residues 428 to 448 (ASPFRRSALKALSKAIPDEEL) form a calmodulin binding (CaMBD) region. EF-hand domains lie at 446–481 (EELVFLKAQFMLLDPKDGGLSLNCFTMALTRYATDA), 482–517 (MMESRLPDILNTMQPLAQKKLDFEEFCAAAVSVYQL), 518–557 (EALEEWEQIATSAFEHFEHEGNRIISVQELAGEMSVGPSA), and 558–587 (YPLLKDWIRSSDGKLSFLGYAKFLHGVTVR). Ca(2+) is bound by residues Asp462, Lys501, Glu506, Asn539, Glu546, Ser567, Asp569, and Lys571. Phosphoserine is present on Ser573.

This sequence belongs to the protein kinase superfamily. Ser/Thr protein kinase family. CDPK subfamily. In terms of assembly, binds calmodulin (CaM) in a calcium-dependent manner. Autophosphorylated.

It localises to the cell membrane. It catalyses the reaction L-seryl-[protein] + ATP = O-phospho-L-seryl-[protein] + ADP + H(+). It carries out the reaction L-threonyl-[protein] + ATP = O-phospho-L-threonyl-[protein] + ADP + H(+). Its activity is regulated as follows. Activated by calcium and calmodulin. Autophosphorylation may play an important role in the regulation of the kinase activity. Functionally, may play a role in signal transduction pathways that involve calcium as a second messenger. The sequence is that of CDPK-related kinase 4 (CRK4) from Arabidopsis thaliana (Mouse-ear cress).